Here is a 918-residue protein sequence, read N- to C-terminus: MDYKETLLLPETNFPMRGNLPQNEPQRLKSWYEERKVYEKMKKNRQNAVKNFNIHDGPPYANGHLHIGHALNKILKDIITKTHYFYGENVRYVPGWDCHGLPIEQQVEVKLGDKKKELSKVEIRELCRQHAREFIDIQRDEFKTLGIIGDFENPYMTMKFEFEADIYKALCEIAKKGLLVERSKPVYWSWAARSALAEAEVEYEEKEDYSIYVAFELDGDALEKLGVKEASAVIWTTTPWTLPANQAISLKPDEIYVLTAENLIFAKPLLESVVQSGLSKGEIKKEFKSSLLENTHAINPLNGRKSKFLLGDHVMMDGGTGLVHTAPGHGEDDYYVCLKYGFSEILMPVDDGGCYDESIKHHGLFRSDVVDEFVGMHIFKANEKILELLGKSLLSVSKFRHSYPFCWRTHKPVIYRATKQWFIAMDESKLGGKTLRQTALKELEKVKFYPSVGIKRIGSMIENRPDWCISRQRDWGVPIAFFRDKATKEVIFDSEILDHIAGIFKEKGADAWWALSIDELLPKGSKYKAENLEKVMDILDVWFDSGSTWHAVLQSDNYDAGKYPASMYLEGSDQHRGWFQSSLLVSTAINSHAPYESILTHGFTVDAKGEKMSKSKGNVIAPQDVAKTHGVEILRLWVGMSDYSSDLKISEDILKQISEQYRKIRNTIRFLLANVNDLESLNTEFNILDKWILARAKKVFDEASACFKNYDFSKGFNILLNFLSADLSGVYLDVCKDRLYCDAKDAPRRRSAQSAMAIITKTLLPLIAPTLTYTVDEVMDYAPKIIKGEAKDAFDLVYEPIKFDLSFEDELLFASREKFNEIVDVLKKDKKIKSTLELSLETTNHNITSYDEREVADLYMVSSVRAYDDSEPLAEFELEGDKFKIIASNLHKCPRCWKFNASKEDALCPRCEEVISAK.

Residues 59–69 (PYANGHLHIGH) carry the 'HIGH' region motif. Glu-570 lines the L-isoleucyl-5'-AMP pocket. Residues 611–615 (KMSKS) carry the 'KMSKS' region motif. Lys-614 contributes to the ATP binding site. The Zn(2+) site is built by Cys-893, Cys-896, Cys-908, and Cys-911.

The protein belongs to the class-I aminoacyl-tRNA synthetase family. IleS type 1 subfamily. As to quaternary structure, monomer. Zn(2+) serves as cofactor.

It is found in the cytoplasm. The catalysed reaction is tRNA(Ile) + L-isoleucine + ATP = L-isoleucyl-tRNA(Ile) + AMP + diphosphate. In terms of biological role, catalyzes the attachment of isoleucine to tRNA(Ile). As IleRS can inadvertently accommodate and process structurally similar amino acids such as valine, to avoid such errors it has two additional distinct tRNA(Ile)-dependent editing activities. One activity is designated as 'pretransfer' editing and involves the hydrolysis of activated Val-AMP. The other activity is designated 'posttransfer' editing and involves deacylation of mischarged Val-tRNA(Ile). This Campylobacter concisus (strain 13826) protein is Isoleucine--tRNA ligase.